The chain runs to 362 residues: P2Y purinoceptor 1 (362 aa).

The Extracellular segment spans residues 1 to 40; it reads MTEALISAALNGTQPELLAGGWAAGNATTKCSLTKTGFQF. N-linked (GlcNAc...) asparagine glycans are attached at residues Asn-11 and Asn-26. Cystine bridges form between Cys-31-Cys-285 and Cys-113-Cys-191. Lys-35 is a binding site for ADP. The chain crosses the membrane as a helical span at residues 41–63; sequence YYLPTVYILVFITGFLGNSVAIW. The Cytoplasmic segment spans residues 64–76; the sequence is MFVFHMRPWSGIS. The chain crosses the membrane as a helical span at residues 77 to 98; the sequence is VYMFNLALADFLYVLTLPALIF. The Extracellular portion of the chain corresponds to 99 to 114; the sequence is YYFNKTDWIFGDVMCK. Asn-102 carries an N-linked (GlcNAc...) asparagine glycan. A helical membrane pass occupies residues 115 to 136; the sequence is LQRFIFHVNLYGSILFLTCISV. Over 137–155 the chain is Cytoplasmic; it reads HRYTGVVHPLKSLGRLKKK. A helical transmembrane segment spans residues 156-177; the sequence is NAVYVSSLVWALVVAVIAPILF. At 178-203 the chain is on the extracellular side; the sequence is YSGTGVRRNKTITCYDTTADEYLRSY. An N-linked (GlcNAc...) asparagine glycan is attached at Asn-186. An ADP-binding site is contributed by 192 to 194; sequence YDT. A helical transmembrane segment spans residues 204-226; it reads FVYSMCTTVFMFCIPFIVILGCY. Residues 227 to 249 are Cytoplasmic-facing; sequence GLIVKALIYKDLDNSPLRRKSIY. A helical membrane pass occupies residues 250-273; that stretch reads LVIIVLTVFAVSYLPFHVMKTLNL. Residues 272–276, 292–295, and Arg-299 each bind ADP; these read NLRAR and YATY. At 274–292 the chain is on the extracellular side; it reads RARLDFQTPQMCAFNDKVY. Residues 293–314 traverse the membrane as a helical segment; the sequence is ATYQVTRGLASLNSCVDPILYF. Topologically, residues 315–362 are cytoplasmic; it reads LAGDTFRRRLSRATRKSSRRSEPNVQSKSEEMTLNILTEYKQNGDTSL.

This sequence belongs to the G-protein coupled receptor 1 family. Brain, spinal cord, gastrointestinal tract, spleen and leg muscle. Is not detected in the heart, liver, stomach, lung and kidney.

Its subcellular location is the cell membrane. Receptor for extracellular adenine nucleotides such as ADP. In platelets, binding to ADP leads to mobilization of intracellular calcium ions via activation of phospholipase C, a change in platelet shape, and ultimately platelet aggregation. In Gallus gallus (Chicken), this protein is P2Y purinoceptor 1 (P2RY1).